We begin with the raw amino-acid sequence, 409 residues long: Tyrosine--tRNA ligase (409 aa).

Residues P54 to H63 carry the 'HIGH' region motif. A 'KMSKS' region motif is present at residues K238–S242. An ATP-binding site is contributed by K241. Positions Q347–L407 constitute an S4 RNA-binding domain.

Belongs to the class-I aminoacyl-tRNA synthetase family. TyrS type 2 subfamily. In terms of assembly, homodimer.

It is found in the cytoplasm. It carries out the reaction tRNA(Tyr) + L-tyrosine + ATP = L-tyrosyl-tRNA(Tyr) + AMP + diphosphate + H(+). In terms of biological role, catalyzes the attachment of tyrosine to tRNA(Tyr) in a two-step reaction: tyrosine is first activated by ATP to form Tyr-AMP and then transferred to the acceptor end of tRNA(Tyr). This chain is Tyrosine--tRNA ligase, found in Bordetella pertussis (strain Tohama I / ATCC BAA-589 / NCTC 13251).